Here is a 255-residue protein sequence, read N- to C-terminus: Hemin import ATP-binding protein HmuV (255 aa).

The 237-residue stretch at 2-238 folds into the ABC transporter domain; that stretch reads LRVENLSIRR…EPLRAVFGLE (237 aa). 34–41 serves as a coordination point for ATP; it reads GPNGAGKS.

It belongs to the ABC transporter superfamily. Heme (hemin) importer (TC 3.A.1.14.5) family. As to quaternary structure, the complex is composed of two ATP-binding proteins (HmuV), two transmembrane proteins (HmuU) and a solute-binding protein (HmuT).

The protein localises to the cell inner membrane. In terms of biological role, part of the ABC transporter complex HmuTUV involved in hemin import. Responsible for energy coupling to the transport system. The polypeptide is Hemin import ATP-binding protein HmuV (Pseudomonas aeruginosa (strain ATCC 15692 / DSM 22644 / CIP 104116 / JCM 14847 / LMG 12228 / 1C / PRS 101 / PAO1)).